Here is a 455-residue protein sequence, read N- to C-terminus: MSVAVVLFTSDLRLHDNPVLRAALRDADEVVPLFVRDDAVHRAGFDAPNPLAFLADCLAALDAGLRHRGGRLIVRRGEAATEVRRVAEETGAARVHIAAGVSRYAARREQRIREALADSGRELHVHDAVVTALAPGRVVPTGGKDHFAVFTPYFRRWEAEGVRGTQTAPRTVRVPDGVASDPLPDRDCVENLSPGLARGGEEAGRKLVTSWLNGPMADYEDGHDDLAGDATSRLSPHLHFGTVSAAELVHRAREKGGLGGEAFVRQLAWRDFHHQVLADRPDASWSDYRPRHDRWRSDADEMHAWKSGLTGYPLVDAAMRQLAHEGWMHNRARMLAASFLTKTLYVDWREGARHFLDLLVDGDVANNQLNWQWVAGTGTDTRPNRVLNPVIQGKRFDARGDYVRGWVPELAEVEGSAIHEPWKLQGLDRAGLDYPDPVVDLAEARARFERARGLD.

Residues 2-131 form the Photolyase/cryptochrome alpha/beta domain; that stretch reads SVAVVLFTSD…ELHVHDAVVT (130 aa). FAD contacts are provided by residues Tyr-219 and 231 to 235; that span reads TSRLS. Interaction with DNA stretches follow at residues 266 to 273 and 330 to 331; these read QLAWRDFH and NR. 361–363 contributes to the FAD binding site; sequence DGD. Gln-392 contacts DNA.

This sequence belongs to the DNA photolyase class-1 family. Monomer. FAD is required as a cofactor. It depends on coenzyme F420-(gamma-Glu)n as a cofactor.

It carries out the reaction cyclobutadipyrimidine (in DNA) = 2 pyrimidine residues (in DNA).. In terms of biological role, involved in repair of UV radiation-induced DNA damage. Catalyzes the light-dependent monomerization (300-600 nm) of cyclobutyl pyrimidine dimers (in cis-syn configuration), which are formed between adjacent bases on the same DNA strand upon exposure to ultraviolet radiation. The protein is Deoxyribodipyrimidine photo-lyase (phr) of Streptomyces griseus.